Consider the following 176-residue polypeptide: DNA-directed RNA polymerase II subunit 7 (176 aa).

The protein belongs to the eukaryotic RPB7/RPC8 RNA polymerase subunit family. In terms of assembly, component of the RNA polymerase II complex consisting of at least 12 subunits. Interacts with NRPB4.

The protein localises to the nucleus. DNA-dependent RNA polymerase catalyzes the transcription of DNA into RNA using the four ribonucleoside triphosphates as substrates. Component of RNA polymerase II which synthesizes mRNA precursors and many functional non-coding RNAs. Pol II is the central component of the basal RNA polymerase II transcription machinery. It is composed of mobile elements that move relative to each other. NRPB7 is part of a subcomplex with NRPB4 that binds to a pocket formed by NRPB1, NRPB2 and NRPB6 at the base of the clamp element. The NRBP4-NRPB7 subcomplex seems to lock the clamp via NRPB7 in the closed conformation thus preventing double-stranded DNA to enter the active site cleft. The NRPB4-NRPB7 subcomplex binds single-stranded DNA and RNA. This Arabidopsis thaliana (Mouse-ear cress) protein is DNA-directed RNA polymerase II subunit 7 (NRPB7).